A 139-amino-acid chain; its full sequence is Holo-[acyl-carrier-protein] synthase (139 aa).

The Mg(2+) site is built by aspartate 8 and glutamate 57.

It belongs to the P-Pant transferase superfamily. AcpS family. It depends on Mg(2+) as a cofactor.

It localises to the cytoplasm. It catalyses the reaction apo-[ACP] + CoA = holo-[ACP] + adenosine 3',5'-bisphosphate + H(+). Its function is as follows. Transfers the 4'-phosphopantetheine moiety from coenzyme A to a Ser of acyl-carrier-protein. The polypeptide is Holo-[acyl-carrier-protein] synthase (Rhizobium meliloti (strain 1021) (Ensifer meliloti)).